The following is a 729-amino-acid chain: Leucine-rich repeat flightless-interacting protein 1 (729 aa).

At Thr2 the chain carries N-acetylthreonine. At Ser16 the chain carries Phosphoserine. A compositionally biased stretch (basic and acidic residues) spans 40–65 (IRMKELERQQKEVEERPDKDFAEKGS). The disordered stretch occupies residues 40-98 (IRMKELERQQKEVEERPDKDFAEKGSRNMPSLSAATLASLGGTSSRRGSGDTSISMDTE). Over residues 78–94 (SLGGTSSRRGSGDTSIS) the composition is skewed to low complexity. A phosphoserine mark is found at Ser83, Ser84, Ser88, Asp90, Ser92, and Thr97. A coiled-coil region spans residues 94-194 (SMDTEASIRE…LRQREEMLEK (101 aa)). Residue Lys249 forms a Glycyl lysine isopeptide (Lys-Gly) (interchain with G-Cter in SUMO1) linkage. The tract at residues 253–729 (VEKVGQRETL…SKSKEDCTMS (477 aa)) is disordered. The segment covering 260–272 (ETLQNSEQEQPKP) has biased composition (polar residues). A compositionally biased stretch (basic and acidic residues) spans 277-297 (DCVDRGVSHPGEKAENQRPAE). At Ser302 the chain carries Phosphoserine. A compositionally biased stretch (polar residues) spans 313-326 (QQVQSQDQENTSDL). Residues 327–343 (KNSEQIESHKVTNKSDS) are compositionally biased toward basic and acidic residues. The segment covering 344–354 (RASNSPEQSSC) has biased composition (polar residues). Phosphoserine occurs at positions 346 and 348. 2 stretches are compositionally biased toward basic and acidic residues: residues 435–445 (KGTENHGESCL) and 482–494 (KADD…EKPI). Residues 465–567 (EEAIVQIPQA…KNKKKKAATP (103 aa)) are DNA-binding. Over residues 506–523 (INQSGHQDTTGPGSTDAQ) the composition is skewed to polar residues. Ser538 and Ser547 each carry phosphoserine. Over residues 550-564 (KKTKNKKKKNKKKKA) the composition is skewed to basic residues. The span at 608–618 (QKIRAGSREPV) shows a compositional bias: basic and acidic residues. Phosphoserine is present on residues Ser614 and Ser670. 2 stretches are compositionally biased toward polar residues: residues 667 to 684 (CDTS…SQHG) and 693 to 710 (LDNS…SESG). The span at 713 to 729 (AREEVGNSKSKEDCTMS) shows a compositional bias: basic and acidic residues.

Belongs to the LRRFIP family. Homodimer. May also form higher oligomers. Interacts with FLII. Interacts with MYD88. Competes with FLII for MyD88-binding, even in the absence of LPS. In terms of tissue distribution, ubiquitously expressed.

It is found in the nucleus. The protein localises to the cytoplasm. In terms of biological role, transcriptional repressor which preferentially binds to the GC-rich consensus sequence (5'-AGCCCCCGGCG-3') and may regulate expression of TNF, EGFR and PDGFA. May control smooth muscle cells proliferation following artery injury through PDGFA repression. May also bind double-stranded RNA. Positively regulates Toll-like receptor (TLR) signaling in response to agonist probably by competing with the negative FLII regulator for MYD88-binding. The chain is Leucine-rich repeat flightless-interacting protein 1 (Lrrfip1) from Mus musculus (Mouse).